Here is a 272-residue protein sequence, read N- to C-terminus: Large ribosomal subunit protein uL2cz/uL2cy (272 aa).

The span at 1–13 shows a compositional bias: polar residues; sequence MHLYKTSTPSTRN. Disordered stretches follow at residues 1-27 and 222-272; these read MHLY…PRNN and NPVD…RRSK.

It belongs to the universal ribosomal protein uL2 family. In terms of assembly, part of the 50S ribosomal subunit.

Its subcellular location is the plastid. It localises to the chloroplast. In Buxus microphylla (Littleleaf boxwood), this protein is Large ribosomal subunit protein uL2cz/uL2cy (rpl2-A).